The sequence spans 335 residues: DNA-directed RNA polymerase subunit alpha (335 aa).

The segment at 1 to 233 is alpha N-terminal domain (alpha-NTD); sequence MTAVNDFLTP…QQIAVFVDLE (233 aa). The tract at residues 247–335 is alpha C-terminal domain (alpha-CTD); sequence IDPILLRPVD…DDDRLNAKLR (89 aa).

This sequence belongs to the RNA polymerase alpha chain family. In terms of assembly, homodimer. The RNAP catalytic core consists of 2 alpha, 1 beta, 1 beta' and 1 omega subunit. When a sigma factor is associated with the core the holoenzyme is formed, which can initiate transcription.

It catalyses the reaction RNA(n) + a ribonucleoside 5'-triphosphate = RNA(n+1) + diphosphate. DNA-dependent RNA polymerase catalyzes the transcription of DNA into RNA using the four ribonucleoside triphosphates as substrates. This Alcanivorax borkumensis (strain ATCC 700651 / DSM 11573 / NCIMB 13689 / SK2) protein is DNA-directed RNA polymerase subunit alpha.